The sequence spans 422 residues: Exodeoxyribonuclease 7 large subunit (422 aa).

Belongs to the XseA family. Heterooligomer composed of large and small subunits.

It is found in the cytoplasm. It catalyses the reaction Exonucleolytic cleavage in either 5'- to 3'- or 3'- to 5'-direction to yield nucleoside 5'-phosphates.. Bidirectionally degrades single-stranded DNA into large acid-insoluble oligonucleotides, which are then degraded further into small acid-soluble oligonucleotides. The protein is Exodeoxyribonuclease 7 large subunit of Leptospira interrogans serogroup Icterohaemorrhagiae serovar copenhageni (strain Fiocruz L1-130).